Here is a 94-residue protein sequence, read N- to C-terminus: Long neurotoxin LNTX8 (94 aa).

An N-terminal signal peptide occupies residues 1–21 (MKTLLLTLVVVTIMCLDLGYT). Intrachain disulfides connect cysteine 24–cysteine 43, cysteine 36–cysteine 64, cysteine 49–cysteine 53, cysteine 68–cysteine 79, and cysteine 80–cysteine 85.

The protein belongs to the three-finger toxin family. Long-chain subfamily. Type II alpha-neurotoxin sub-subfamily. Expressed by the venom gland.

The protein resides in the secreted. In terms of biological role, binds with high affinity to muscular (alpha-1/CHRNA1) and neuronal (alpha-7/CHRNA7) nicotinic acetylcholine receptor (nAChR) and inhibits acetylcholine from binding to the receptor, thereby impairing neuromuscular and neuronal transmission. The protein is Long neurotoxin LNTX8 of Ophiophagus hannah (King cobra).